The sequence spans 225 residues: Phosphatidylserine decarboxylase proenzyme (225 aa).

S182 serves as the catalytic Schiff-base intermediate with substrate; via pyruvic acid. A Pyruvic acid (Ser); by autocatalysis modification is found at S182.

It belongs to the phosphatidylserine decarboxylase family. PSD-A subfamily. As to quaternary structure, heterodimer of a large membrane-associated beta subunit and a small pyruvoyl-containing alpha subunit. Pyruvate is required as a cofactor. In terms of processing, is synthesized initially as an inactive proenzyme. Formation of the active enzyme involves a self-maturation process in which the active site pyruvoyl group is generated from an internal serine residue via an autocatalytic post-translational modification. Two non-identical subunits are generated from the proenzyme in this reaction, and the pyruvate is formed at the N-terminus of the alpha chain, which is derived from the carboxyl end of the proenzyme. The post-translation cleavage follows an unusual pathway, termed non-hydrolytic serinolysis, in which the side chain hydroxyl group of the serine supplies its oxygen atom to form the C-terminus of the beta chain, while the remainder of the serine residue undergoes an oxidative deamination to produce ammonia and the pyruvoyl prosthetic group on the alpha chain.

The protein resides in the cell membrane. The catalysed reaction is a 1,2-diacyl-sn-glycero-3-phospho-L-serine + H(+) = a 1,2-diacyl-sn-glycero-3-phosphoethanolamine + CO2. The protein operates within phospholipid metabolism; phosphatidylethanolamine biosynthesis; phosphatidylethanolamine from CDP-diacylglycerol: step 2/2. Functionally, catalyzes the formation of phosphatidylethanolamine (PtdEtn) from phosphatidylserine (PtdSer). This is Phosphatidylserine decarboxylase proenzyme from Neorickettsia sennetsu (strain ATCC VR-367 / Miyayama) (Ehrlichia sennetsu).